The following is a 222-amino-acid chain: Adenylate kinase (222 aa).

10-15 (GAGKGT) is a binding site for ATP. The interval 30–59 (STGDMLRAAVKAGTPLGIEAKKVMDAGGLV) is NMP. Residues T31, R36, 57-59 (GLV), 85-88 (GFPR), and Q92 contribute to the AMP site. Positions 122 to 159 (GRRVHVASGRTYHVKYNPPKTEGVDDESGEPLIQRDDD) are LID. ATP is bound by residues R123 and 132–133 (TY). Positions 138-160 (NPPKTEGVDDESGEPLIQRDDDK) are disordered. R156 and R167 together coordinate AMP. G207 provides a ligand contact to ATP.

The protein belongs to the adenylate kinase family. As to quaternary structure, monomer.

Its subcellular location is the cytoplasm. The enzyme catalyses AMP + ATP = 2 ADP. Its pathway is purine metabolism; AMP biosynthesis via salvage pathway; AMP from ADP: step 1/1. Catalyzes the reversible transfer of the terminal phosphate group between ATP and AMP. Plays an important role in cellular energy homeostasis and in adenine nucleotide metabolism. The polypeptide is Adenylate kinase (Ralstonia pickettii (strain 12J)).